The chain runs to 234 residues: Carboxy-S-adenosyl-L-methionine synthase (234 aa).

Residues tyrosine 35, 60–62 (GSS), 83–84 (DN), asparagine 124, and arginine 191 contribute to the S-adenosyl-L-methionine site.

It belongs to the class I-like SAM-binding methyltransferase superfamily. Cx-SAM synthase family. In terms of assembly, homodimer.

The catalysed reaction is prephenate + S-adenosyl-L-methionine = carboxy-S-adenosyl-L-methionine + 3-phenylpyruvate + H2O. In terms of biological role, catalyzes the conversion of S-adenosyl-L-methionine (SAM) to carboxy-S-adenosyl-L-methionine (Cx-SAM). In Nautilia profundicola (strain ATCC BAA-1463 / DSM 18972 / AmH), this protein is Carboxy-S-adenosyl-L-methionine synthase.